The chain runs to 396 residues: MKVLVINAGSSSIKYQLLDMSTGNDLASGIVERIGEEMGSISYKTGEKYTAEQPFPTHREGMVEVINLLTDADKGVVKDKAEIAAIGHRIVHGGELFFEPVEIDDKVLQGIRDCIPLAPLHNPGHVIGIETAMELFPGVRQVAVFDTSFHQTMEPKAYMYGVPYKYYEDWGLRRYGAHGTSHKYVARETAKLLGKPLEESNIITVHLGNGASISAVKNGKCYDTSMGLTPLGGIIMGTRCGDIDPAIVGFIAERTKQSAAEVVATLTNESGLKGICGSNDLRDIHARIEEGDEKAKLALDMACHKVRQFIGAYAFELGRVDAIVFTAGIGENDEIYRENCLSGLENFGITINKEKNENWDRTPSFISEDDGAVKVAIIATNEELEIANDTVKVLGL.

Asparagine 7 is a binding site for Mg(2+). Lysine 14 contributes to the ATP binding site. Arginine 89 serves as a coordination point for substrate. Aspartate 146 acts as the Proton donor/acceptor in catalysis. Residues 206-210 (HLGNG), 280-282 (DLR), and 328-332 (GIGEN) each bind ATP. Glutamate 382 contacts Mg(2+).

It belongs to the acetokinase family. In terms of assembly, homodimer. Requires Mg(2+) as cofactor. Mn(2+) serves as cofactor.

The protein resides in the cytoplasm. The catalysed reaction is acetate + ATP = acetyl phosphate + ADP. The protein operates within metabolic intermediate biosynthesis; acetyl-CoA biosynthesis; acetyl-CoA from acetate: step 1/2. Functionally, catalyzes the formation of acetyl phosphate from acetate and ATP. Can also catalyze the reverse reaction. This Maridesulfovibrio salexigens (strain ATCC 14822 / DSM 2638 / NCIMB 8403 / VKM B-1763) (Desulfovibrio salexigens) protein is Acetate kinase.